The sequence spans 351 residues: UDP-3-O-acylglucosamine N-acyltransferase (351 aa).

Catalysis depends on His-240, which acts as the Proton acceptor.

It belongs to the transferase hexapeptide repeat family. LpxD subfamily. As to quaternary structure, homotrimer.

The enzyme catalyses a UDP-3-O-[(3R)-3-hydroxyacyl]-alpha-D-glucosamine + a (3R)-hydroxyacyl-[ACP] = a UDP-2-N,3-O-bis[(3R)-3-hydroxyacyl]-alpha-D-glucosamine + holo-[ACP] + H(+). Its pathway is bacterial outer membrane biogenesis; LPS lipid A biosynthesis. In terms of biological role, catalyzes the N-acylation of UDP-3-O-acylglucosamine using 3-hydroxyacyl-ACP as the acyl donor. Is involved in the biosynthesis of lipid A, a phosphorylated glycolipid that anchors the lipopolysaccharide to the outer membrane of the cell. The polypeptide is UDP-3-O-acylglucosamine N-acyltransferase (Pseudomonas syringae pv. syringae (strain B728a)).